A 152-amino-acid chain; its full sequence is Large ribosomal subunit protein bL9 (152 aa).

Belongs to the bacterial ribosomal protein bL9 family.

In terms of biological role, binds to the 23S rRNA. This chain is Large ribosomal subunit protein bL9, found in Synechococcus sp. (strain CC9605).